Here is a 162-residue protein sequence, read N- to C-terminus: Ribosome maturation factor RimM (162 aa).

The PRC barrel domain maps to 90-161 (EDCYYEADIV…KIIIKPLEVW (72 aa)).

The protein belongs to the RimM family. Binds ribosomal protein uS19.

It localises to the cytoplasm. Functionally, an accessory protein needed during the final step in the assembly of 30S ribosomal subunit, possibly for assembly of the head region. Essential for efficient processing of 16S rRNA. May be needed both before and after RbfA during the maturation of 16S rRNA. It has affinity for free ribosomal 30S subunits but not for 70S ribosomes. The chain is Ribosome maturation factor RimM from Clostridium novyi (strain NT).